Here is a 620-residue protein sequence, read N- to C-terminus: Probable potassium transport system protein Kup (620 aa).

Transmembrane regions (helical) follow at residues 11 to 31 (LAFL…LYAF), 51 to 71 (ILSL…LLLV), 100 to 120 (IAML…VITP), 138 to 158 (LAPY…AVQA), 167 to 187 (FFAP…AHAI), 202 to 222 (AVHF…LVVL), 246 to 266 (WFAL…AYLL), 288 to 308 (LILL…SGIF), 334 to 354 (GQIY…FVML), 364 to 384 (AAYG…LVLV), 396 to 416 (VVTI…STST), and 418 to 438 (LMEG…VMYI).

It belongs to the HAK/KUP transporter (TC 2.A.72) family.

It is found in the cell inner membrane. The catalysed reaction is K(+)(in) + H(+)(in) = K(+)(out) + H(+)(out). In terms of biological role, transport of potassium into the cell. Likely operates as a K(+):H(+) symporter. The sequence is that of Probable potassium transport system protein Kup from Vibrio cholerae serotype O1 (strain ATCC 39541 / Classical Ogawa 395 / O395).